The primary structure comprises 322 residues: Lipoyl synthase (322 aa).

[4Fe-4S] cluster contacts are provided by Cys-69, Cys-74, Cys-80, Cys-95, Cys-99, Cys-102, and Ser-309. In terms of domain architecture, Radical SAM core spans 81 to 298 (FNHGTATFMI…KEIALELGFT (218 aa)).

Belongs to the radical SAM superfamily. Lipoyl synthase family. Requires [4Fe-4S] cluster as cofactor.

It localises to the cytoplasm. It carries out the reaction [[Fe-S] cluster scaffold protein carrying a second [4Fe-4S](2+) cluster] + N(6)-octanoyl-L-lysyl-[protein] + 2 oxidized [2Fe-2S]-[ferredoxin] + 2 S-adenosyl-L-methionine + 4 H(+) = [[Fe-S] cluster scaffold protein] + N(6)-[(R)-dihydrolipoyl]-L-lysyl-[protein] + 4 Fe(3+) + 2 hydrogen sulfide + 2 5'-deoxyadenosine + 2 L-methionine + 2 reduced [2Fe-2S]-[ferredoxin]. The protein operates within protein modification; protein lipoylation via endogenous pathway; protein N(6)-(lipoyl)lysine from octanoyl-[acyl-carrier-protein]: step 2/2. Catalyzes the radical-mediated insertion of two sulfur atoms into the C-6 and C-8 positions of the octanoyl moiety bound to the lipoyl domains of lipoate-dependent enzymes, thereby converting the octanoylated domains into lipoylated derivatives. This chain is Lipoyl synthase, found in Photobacterium profundum (strain SS9).